The chain runs to 335 residues: Mesoderm-specific transcript homolog protein (335 aa).

A run of 2 helical transmembrane segments spans residues 13 to 33 and 63 to 83; these read WWVQ…HIPP and VGVV…TSSY. The region spanning 71–310 is the AB hydrolase-1 domain; the sequence is IVVLLHGFPT…PRSTVSILDD (240 aa). The RVIALD signature appears at 98–103; that stretch reads RVIALD. A glycan (N-linked (GlcNAc...) asparagine) is linked at asparagine 163. Residues 266-286 traverse the membrane as a helical segment; sequence VGALASVTIPIHFIYGPLDPV.

Belongs to the AB hydrolase superfamily. As to expression, highly expressed in hydatidiform moles, but barely expressed in dermoid cysts. Biallelic expression is detected in blood lymphocytes. Seems to imprinted in an isoform-specific manner rather than in a tissue-specific manner in lymphocytes. Isoform 1 is expressed only from the paternal allele. Isoform 2 is expressed from both the paternal allele and the maternal allele.

It is found in the endoplasmic reticulum membrane. The sequence is that of Mesoderm-specific transcript homolog protein (MEST) from Homo sapiens (Human).